The primary structure comprises 198 residues: ATP-dependent Clp protease proteolytic subunit (198 aa).

The Nucleophile role is filled by Ser-98. Residue His-123 is part of the active site.

Belongs to the peptidase S14 family. In terms of assembly, fourteen ClpP subunits assemble into 2 heptameric rings which stack back to back to give a disk-like structure with a central cavity, resembling the structure of eukaryotic proteasomes.

The protein localises to the cytoplasm. The catalysed reaction is Hydrolysis of proteins to small peptides in the presence of ATP and magnesium. alpha-casein is the usual test substrate. In the absence of ATP, only oligopeptides shorter than five residues are hydrolyzed (such as succinyl-Leu-Tyr-|-NHMec, and Leu-Tyr-Leu-|-Tyr-Trp, in which cleavage of the -Tyr-|-Leu- and -Tyr-|-Trp bonds also occurs).. Functionally, cleaves peptides in various proteins in a process that requires ATP hydrolysis. Has a chymotrypsin-like activity. Plays a major role in the degradation of misfolded proteins. The protein is ATP-dependent Clp protease proteolytic subunit of Listeria monocytogenes serovar 1/2a (strain ATCC BAA-679 / EGD-e).